A 240-amino-acid chain; its full sequence is MKRPSGRAADQLRSIRITRNYTKHAEGSVLVEFGDTKVICTVSVENGVPRFLKGQGQGWLTAEYGMLPRATGERNQREASRGKQGGRTLEIQRLIGRSLRAALDMSKLGDVTLYVDCDVIQADGGTRTASITGAMVALVDALKVIKKRGGLKGGDPLKQMIAAVSVGMYQGEPVLDLDYLEDSAAETDLNVVMTSTGGFIEVQGTAEGAPFQPAELNAMLALAQQGMNEIFQLQQAALAD.

Residues arginine 87 and 125-127 (GTR) contribute to the phosphate site.

Belongs to the RNase PH family. Homohexameric ring arranged as a trimer of dimers.

The catalysed reaction is tRNA(n+1) + phosphate = tRNA(n) + a ribonucleoside 5'-diphosphate. Phosphorolytic 3'-5' exoribonuclease that plays an important role in tRNA 3'-end maturation. Removes nucleotide residues following the 3'-CCA terminus of tRNAs; can also add nucleotides to the ends of RNA molecules by using nucleoside diphosphates as substrates, but this may not be physiologically important. Probably plays a role in initiation of 16S rRNA degradation (leading to ribosome degradation) during starvation. This chain is Ribonuclease PH, found in Pseudomonas fluorescens (strain ATCC BAA-477 / NRRL B-23932 / Pf-5).